Consider the following 87-residue polypeptide: Protein moa-2 (87 aa).

The disordered stretch occupies residues 23 to 87 (GTAMRHEPSR…VWTASREESS (65 aa)). 2 stretches are compositionally biased toward basic and acidic residues: residues 26–39 (MRHEPSRMDCESAP) and 50–63 (RNEHVYCRCGEREP).

This Caenorhabditis elegans protein is Protein moa-2.